A 428-amino-acid chain; its full sequence is E3 ubiquitin-protein ligase RNF128 (428 aa).

An N-terminal signal peptide occupies residues 1-38 (MGPPPGIGVYCRGGCGAARLLAWCFLLALSPHAPGSRG). N-linked (GlcNAc...) asparagine glycans are attached at residues asparagine 48, asparagine 59, and asparagine 101. One can recognise a PA domain in the interval 75-183 (SPLEPVSGVL…LKGTKILQSI (109 aa)). A helical transmembrane segment spans residues 208–228 (IFFVSVSFFIITAATVGYFIF). An RING-type; atypical zinc finger spans residues 277 to 318 (CAVCIELYKPNDLVRILTCNHIFHKTCVDPWLLEHRTCPMCK). Residues 342–351 (VSNEASNTAS) show a composition bias toward polar residues. A disordered region spans residues 342-428 (VSNEASNTAS…QEAAVREIKS (87 aa)).

Auto-ubiquitinated. Controls the development of T-cell clonal anergy by ubiquitination. In terms of tissue distribution, expressed in brain, kidney, heart, liver, ovary, testis and thymus. Expression increased as early as 4 hours by 5- to 7-fold in anergized cultures as compared to resting or activated cells.

The protein localises to the cytoplasm. Its subcellular location is the endomembrane system. The protein resides in the cytoskeleton. It is found in the perinuclear region. The catalysed reaction is S-ubiquitinyl-[E2 ubiquitin-conjugating enzyme]-L-cysteine + [acceptor protein]-L-lysine = [E2 ubiquitin-conjugating enzyme]-L-cysteine + N(6)-ubiquitinyl-[acceptor protein]-L-lysine.. The protein operates within protein modification; protein ubiquitination. Its function is as follows. E3 ubiquitin-protein ligase that catalyzes 'Lys-27', 'Lys-48'- or 'Lys-63'-linked polyubiquitin chains formation and plays a role in different biological processes such as modulation of immune response, cytoskeletal dynamics or protein homeostasis. Inhibits IL2 and IL4 transcription, thereby playing an important role in the induction of the anergic phenotype, a long-term stable state of T-lymphocyte unresponsiveness to antigenic stimulation associated with the blockade of interleukin production. Ubiquitinates ARPC5 with 'Lys-48' linkages and COR1A with 'Lys-63' linkages leading to their degradation, down-regulation of these cytoskeletal components results in impaired lamellipodium formation and reduced accumulation of F-actin at the immunological synapse. Functions in the patterning of the dorsal ectoderm; sensitizes ectoderm to respond to neural-inducing signals. Plays a positive role in innate immune response by promoting 'Lys-63'-linked ubiquitination of TBK1 after RNA- or DNA-virus infection. Regulates alveolar macrophage activation and neutrophil infiltration by interacting with TLR4, targeting it for degradation, and inhibiting NF-kappa-B activation, hence decreasing pro-inflammatory cytokines. Negatively regulates the IL-3/STAT5 signaling pathway by facilitating 'Lys-27'-linked polyubiquitination of IL3RA leading to its degradation via lysosomal pathway. Directly regulates the N-glycosylation process in the endoplasmic reticulum by targeting the glycosyl-transferase RPN1 for ubiquitination and degradation. Other substrates targeted for degradation by RNF128 include transmembrane proteins CD40L, CD83 or the tetraspanin CD151. The polypeptide is E3 ubiquitin-protein ligase RNF128 (Rnf128) (Mus musculus (Mouse)).